A 131-amino-acid polypeptide reads, in one-letter code: Modulator protein MzrA (131 aa).

Residues 1–14 (MSIRWLFPKLTPRK) lie on the Cytoplasmic side of the membrane. A helical membrane pass occupies residues 15 to 31 (VARILILLALPIIALTQ). The Periplasmic portion of the chain corresponds to 32 to 131 (SQSLRHSQDD…KLTQKQSKLG (100 aa)).

The protein belongs to the MzrA family. Interacts with EnvZ.

It localises to the cell inner membrane. In terms of biological role, modulates the activity of the EnvZ/OmpR two-component regulatory system, probably by directly modulating EnvZ enzymatic activity and increasing stability of phosphorylated OmpR. The chain is Modulator protein MzrA from Pectobacterium carotovorum subsp. carotovorum (strain PC1).